We begin with the raw amino-acid sequence, 298 residues long: Small ribosomal subunit protein uS2 (298 aa).

The disordered stretch occupies residues 232–298; sequence ETFEGDDIPS…TAEAEEPAAE (67 aa). Residues 234–250 show a composition bias toward acidic residues; the sequence is FEGDDIPSAIDFEDETP. Residues 251-276 show a composition bias toward low complexity; it reads EPVAEVADAEVAAAEPVAEAAPTAEA.

This sequence belongs to the universal ribosomal protein uS2 family.

This chain is Small ribosomal subunit protein uS2, found in Acaryochloris marina (strain MBIC 11017).